The chain runs to 826 residues: Ribosome-releasing factor 2, mitochondrial (826 aa).

The N-terminal 44 residues, 1–44 (MIVRNLLGKNRLCCLQPKLLLSTLSQRPQLQLSLQLLCRATRLY), are a transit peptide targeting the mitochondrion. The 288-residue stretch at 53–340 (PKTRNIGIIA…GITNYLPSPL (288 aa)) folds into the tr-type G domain. GTP-binding positions include 62–69 (AHIDAGKT), 126–130 (DTPGH), and 180–183 (NKMD).

Belongs to the TRAFAC class translation factor GTPase superfamily. Classic translation factor GTPase family. EF-G/EF-2 subfamily.

Its subcellular location is the mitochondrion. Functionally, mitochondrial GTPase that mediates the disassembly of ribosomes from messenger RNA at the termination of mitochondrial protein biosynthesis. Not involved in the GTP-dependent ribosomal translocation step during translation elongation. The polypeptide is Ribosome-releasing factor 2, mitochondrial (Lodderomyces elongisporus (strain ATCC 11503 / CBS 2605 / JCM 1781 / NBRC 1676 / NRRL YB-4239) (Yeast)).